We begin with the raw amino-acid sequence, 342 residues long: Polygalacturonase inhibitor 1 (342 aa).

The signal sequence occupies residues 1 to 29 (MTQFNIPVTMSSSLSIILVILVSLRTALS). 2 cysteine pairs are disulfide-bonded: Cys32-Cys62 and Cys63-Cys72. The N-linked (GlcNAc...) asparagine glycan is linked to Asn64. 10 LRR repeats span residues 82 to 107 (NNLD…LPYL), 108 to 132 (NFLY…LTQL), 133 to 156 (HYLY…IKTL), 157 to 180 (VTLD…LPNL), 181 to 205 (GGIT…SKLF), 206 to 228 (TAMT…NLNL), 229 to 252 (AFVD…DKNT), 253 to 275 (KKIH…SKNL), 276 to 299 (NGLD…LKFL), and 300 to 319 (QSLN…GGNL). A glycan (N-linked (GlcNAc...) asparagine) is linked at Asn141. Asn303 carries N-linked (GlcNAc...) asparagine glycosylation. 2 disulfides stabilise this stretch: Cys310–Cys332 and Cys334–Cys341.

Belongs to the polygalacturonase-inhibiting protein family.

It localises to the secreted. The protein localises to the cell wall. It is found in the membrane. Its function is as follows. Inhibitor of fungal polygalacturonase. It is an important factor for plant resistance to phytopathogenic fungi. Substrate preference is polygalacturonase (PG) from A.niger &gt;&gt; PG of F.oxysporum, A.solani or B.cinerea. Not active on PG from F.moniliforme. This is Polygalacturonase inhibitor 1 (PGIP1) from Phaseolus vulgaris (Kidney bean).